The primary structure comprises 193 residues: Peptidyl-tRNA hydrolase (193 aa).

Tyr17 lines the tRNA pocket. The active-site Proton acceptor is the His22. Positions 68, 70, and 116 each coordinate tRNA.

Belongs to the PTH family. In terms of assembly, monomer.

Its subcellular location is the cytoplasm. It carries out the reaction an N-acyl-L-alpha-aminoacyl-tRNA + H2O = an N-acyl-L-amino acid + a tRNA + H(+). Its function is as follows. Hydrolyzes ribosome-free peptidyl-tRNAs (with 1 or more amino acids incorporated), which drop off the ribosome during protein synthesis, or as a result of ribosome stalling. Functionally, catalyzes the release of premature peptidyl moieties from peptidyl-tRNA molecules trapped in stalled 50S ribosomal subunits, and thus maintains levels of free tRNAs and 50S ribosomes. This is Peptidyl-tRNA hydrolase from Chromobacterium violaceum (strain ATCC 12472 / DSM 30191 / JCM 1249 / CCUG 213 / NBRC 12614 / NCIMB 9131 / NCTC 9757 / MK).